The primary structure comprises 347 residues: Uroporphyrinogen decarboxylase (347 aa).

Substrate is bound by residues 36-40, D86, Y160, S212, and H326; that span reads RQAGR.

The protein belongs to the uroporphyrinogen decarboxylase family. In terms of assembly, homodimer.

The protein localises to the cytoplasm. It carries out the reaction uroporphyrinogen III + 4 H(+) = coproporphyrinogen III + 4 CO2. The protein operates within porphyrin-containing compound metabolism; protoporphyrin-IX biosynthesis; coproporphyrinogen-III from 5-aminolevulinate: step 4/4. Catalyzes the decarboxylation of four acetate groups of uroporphyrinogen-III to yield coproporphyrinogen-III. This Wolbachia sp. subsp. Brugia malayi (strain TRS) protein is Uroporphyrinogen decarboxylase.